Consider the following 547-residue polypeptide: Eukaryotic translation initiation factor 3 subunit D (547 aa).

2 disordered regions span residues 1 to 22 (MANF…PSTS) and 114 to 159 (SVRG…TRDS). Over residues 126–148 (GRGGQRGGFSTRGGRGGARGGYG) the composition is skewed to gly residues. Residues 284 to 298 (PLDYITVNENAADPP) form an RNA gate region.

The protein belongs to the eIF-3 subunit D family. As to quaternary structure, component of the eukaryotic translation initiation factor 3 (eIF-3) complex.

The protein localises to the cytoplasm. Functionally, mRNA cap-binding component of the eukaryotic translation initiation factor 3 (eIF-3) complex, which is involved in protein synthesis of a specialized repertoire of mRNAs and, together with other initiation factors, stimulates binding of mRNA and methionyl-tRNAi to the 40S ribosome. The eIF-3 complex specifically targets and initiates translation of a subset of mRNAs involved in cell proliferation. In the eIF-3 complex, eif3d specifically recognizes and binds the 7-methylguanosine cap of a subset of mRNAs. The sequence is that of Eukaryotic translation initiation factor 3 subunit D from Cryptococcus neoformans var. neoformans serotype D (strain B-3501A) (Filobasidiella neoformans).